The following is a 694-amino-acid chain: Heat shock protein HSP 90-alpha (694 aa).

A phosphothreonine; by PRKDC mark is found at Thr-5 and Thr-7. The tract at residues 9 to 236 (DQPMEEEEVE…DKEVSDDEAK (228 aa)) is interaction with NR3C1. Asn-51 provides a ligand contact to ATP. N6-acetyllysine occurs at positions 58 and 84. 3 residues coordinate ATP: Asp-93, Lys-112, and Phe-138. The segment covering 228 to 241 (KEVSDDEAKQPDDK) has biased composition (basic and acidic residues). A disordered region spans residues 228 to 275 (KEVSDDEAKQPDDKPEIEDVGSDEEEEEKKDGDIDQEELNKTKPIWTR). 2 positions are modified to phosphoserine: Ser-231 and Ser-249. Over residues 242-255 (PEIEDVGSDEEEEE) the composition is skewed to acidic residues. The span at 256-268 (KKDGDIDQEELNK) shows a compositional bias: basic and acidic residues. The interval 258 to 578 (DGDIDQEELN…TANMERIMKA (321 aa)) is interaction with NR3C1. Residues 261 to 582 (IDQEELNKTK…ERIMKAQALR (322 aa)) form an interaction with FNIP2 and TSC1 region. Positions 261-694 (IDQEELNKTK…DDTSRMEEVD (434 aa)) are interaction with FLCN and FNIP1. Position 289 is a phosphotyrosine (Tyr-289). ATP is bound at residue Arg-376. At Lys-419 the chain carries N6-acetyllysine. The residue at position 429 (Ser-429) is a Phosphoserine. At Lys-434 the chain carries N6-acetyllysine. The residue at position 452 (Ser-452) is a Phosphoserine. Position 465 is an N6-acetyllysine (Lys-465). Tyr-468 is modified (phosphotyrosine). Lys-547 is subject to N6-acetyllysine. Cys-560 carries the post-translational modification S-nitrosocysteine. Residues 590-693 (MAAKKHLEVN…DDDTSRMEEV (104 aa)) are interaction with NR1D1. At Ser-603 the chain carries Phosphoserine. Residues 644–694 (QTHANRIYRMIKLGLGIDEDDPTADDTAAAVTEEMPPLEGDDDTSRMEEVD) form a required for homodimerization region. A disordered region spans residues 662–694 (EDDPTADDTAAAVTEEMPPLEGDDDTSRMEEVD). Residues 668 to 677 (DDTAAAVTEE) show a composition bias toward low complexity. A TPR repeat-binding motif is present at residues 685–694 (DDTSRMEEVD). The tract at residues 690 to 694 (MEEVD) is essential for interaction with SMYD3, TSC1 and STIP1/HOP. The tract at residues 691–694 (EEVD) is essential for interaction with SGTA and TTC1.

The protein belongs to the heat shock protein 90 family. In terms of assembly, homodimer. Identified in NR3C1/GCR steroid receptor-chaperone complexes formed at least by NR3C1, HSP90AA1 and a variety of proteins containing TPR repeats such as FKBP4, FKBP5, PPID, PPP5C or STIP1. Forms a complex containing HSP90AA1, TSC1 and TSC2; TSC1 is required to recruit TCS2 to the complex. The closed form interacts (via the middle domain and TPR repeat-binding motif) with co-chaperone TSC1 (via C-terminus). Interacts with TOM34. Interacts with TERT; the interaction, together with PTGES3, is required for correct assembly and stabilization of the TERT holoenzyme complex. Interacts with CHORDC1 and DNAJC7. Interacts with STUB1 and UBE2N; may couple the chaperone and ubiquitination systems. Interacts (via TPR repeat-binding motif) with PPP5C (via TPR repeats); the interaction is direct and activates PPP5C phosphatase activity. Following LPS binding, may form a complex with CXCR4, GDF5 and HSPA8. Interacts with KSR1. Interacts with co-chaperone CDC37 (via C-terminus); the interaction inhibits HSP90AA1 ATPase activity. May interact with NWD1. Interacts with FNIP1 and FNIP2; the interaction inhibits HSP90AA1 ATPase activity. Interacts with co-chaperone AHSA1 (phosphorylated on 'Tyr-223'); the interaction activates HSP90AA1 ATPase activity and results in the dissociation of TSC1 from HSP90AA1. Interacts with FLCN in the presence of FNIP1. Interacts with HSP70, STIP1 and PTGES3. Interacts with SMYD3; this interaction enhances SMYD3 histone-lysine N-methyltransferase. Interacts with SGTA (via TPR repeats). Interacts with TTC1 (via TPR repeats). Interacts with HSF1 in an ATP-dependent manner. Interacts with MET; the interaction suppresses MET kinase activity. Interacts with ERBB2 in an ATP-dependent manner; the interaction suppresses ERBB2 kinase activity. Interacts with HIF1A, KEAP1 and RHOBTB2. Interacts with HSF1; this interaction is decreased in a IER5-dependent manner, promoting HSF1 accumulation in the nucleus, homotrimerization and DNA-binding activities. Interacts with STUB1 and SMAD3. Interacts with HSP90AB1; interaction is constitutive. Interacts with HECTD1 (via N-terminus). Interacts with NR3C1 (via domain NR LBD) and NR1D1 (via domain NR LBD). Interacts with NLPR12. Interacts with PDCL3. Interacts with TOMM70; the interaction is required for preprotein mitochondrial import. Interacts with TOMM70, IRF3 and TBK1; the interactions are direct and mediate the association of TOMM70 with IRF3 and TBK1. Forms a complex with ASL, ASS1 and NOS2; the complex regulates cell-autonomous L-arginine synthesis and citrulline recycling while channeling extracellular L-arginine to nitric oxide synthesis pathway. Post-translationally, ISGylated. In terms of processing, S-nitrosylated; negatively regulates the ATPase activity and the activation of eNOS by HSP90AA1. Ubiquitinated via 'Lys-63'-linked polyubiquitination by HECTD1. Ubiquitination promotes translocation into the cytoplasm away from the membrane and secretory pathways.

The protein localises to the nucleus. It localises to the cytoplasm. The protein resides in the melanosome. It is found in the cell membrane. Its subcellular location is the mitochondrion. The catalysed reaction is ATP + H2O = ADP + phosphate + H(+). With respect to regulation, in the resting state, through the dimerization of its C-terminal domain, HSP90 forms a homodimer which is defined as the open conformation. Upon ATP-binding, the N-terminal domain undergoes significant conformational changes and comes in contact to form an active closed conformation. After HSP90 finishes its chaperoning tasks of assisting the proper folding, stabilization and activation of client proteins under the active state, ATP molecule is hydrolyzed to ADP which then dissociates from HSP90 and directs the protein back to the resting state. Co-chaperone TSC1 promotes ATP binding and inhibits HSP90AA1 ATPase activity. Binding to phosphorylated AHSA1 promotes HSP90AA1 ATPase activity. Inhibited by geldanamycin, Ganetespib (STA-9090) and SNX-2112. Molecular chaperone that promotes the maturation, structural maintenance and proper regulation of specific target proteins involved for instance in cell cycle control and signal transduction. Undergoes a functional cycle that is linked to its ATPase activity which is essential for its chaperone activity. This cycle probably induces conformational changes in the client proteins, thereby causing their activation. Interacts dynamically with various co-chaperones that modulate its substrate recognition, ATPase cycle and chaperone function. Engages with a range of client protein classes via its interaction with various co-chaperone proteins or complexes, that act as adapters, simultaneously able to interact with the specific client and the central chaperone itself. Recruitment of ATP and co-chaperone followed by client protein forms a functional chaperone. After the completion of the chaperoning process, properly folded client protein and co-chaperone leave HSP90 in an ADP-bound partially open conformation and finally, ADP is released from HSP90 which acquires an open conformation for the next cycle. Plays a critical role in mitochondrial import, delivers preproteins to the mitochondrial import receptor TOMM70. Apart from its chaperone activity, it also plays a role in the regulation of the transcription machinery. HSP90 and its co-chaperones modulate transcription at least at three different levels. In the first place, they alter the steady-state levels of certain transcription factors in response to various physiological cues. Second, they modulate the activity of certain epigenetic modifiers, such as histone deacetylases or DNA methyl transferases, and thereby respond to the change in the environment. Third, they participate in the eviction of histones from the promoter region of certain genes and thereby turn on gene expression. Binds bacterial lipopolysaccharide (LPS) and mediates LPS-induced inflammatory response, including TNF secretion by monocytes. Antagonizes STUB1-mediated inhibition of TGF-beta signaling via inhibition of STUB1-mediated SMAD3 ubiquitination and degradation. Mediates the association of TOMM70 with IRF3 or TBK1 in mitochondrial outer membrane which promotes host antiviral response. The polypeptide is Heat shock protein HSP 90-alpha (HSP90AA1) (Oryctolagus cuniculus (Rabbit)).